Consider the following 39-residue polypeptide: Photosystem II reaction center protein Y (39 aa).

A helical membrane pass occupies residues R4–G24.

It belongs to the PsbY family. In terms of assembly, PSII is composed of 1 copy each of membrane proteins PsbA, PsbB, PsbC, PsbD, PsbE, PsbF, PsbH, PsbI, PsbJ, PsbK, PsbL, PsbM, PsbT, PsbX, PsbY, PsbZ, Psb30/Ycf12, peripheral proteins PsbO, CyanoQ (PsbQ), PsbU, PsbV and a large number of cofactors. It forms dimeric complexes.

Its subcellular location is the cellular thylakoid membrane. Functionally, loosely associated component of the core of photosystem II (PSII), it is not always seen in crystals. PSII is a light-driven water plastoquinone oxidoreductase, using light energy to abstract electrons from H(2)O, generating a proton gradient subsequently used for ATP formation. This is Photosystem II reaction center protein Y from Synechocystis sp. (strain ATCC 27184 / PCC 6803 / Kazusa).